Reading from the N-terminus, the 218-residue chain is Fucoxanthin-chlorophyll a-c binding protein, chloroplastic (218 aa).

The N-terminal 36 residues, Met-1–Met-36, are a transit peptide targeting the chloroplast.

This sequence belongs to the fucoxanthin chlorophyll protein family. As to quaternary structure, the LHC complex of chromophytic algae is composed of fucoxanthin, chlorophyll A and C bound non-covalently by fucoxanthin chlorophyll proteins (FCPs). The ratio of pigments in this LHC is; fucoxanthin: chlorophyll C: chlorophyll A; (0.6-1): (0.1-0.3): (1).

It localises to the plastid. Its subcellular location is the chloroplast thylakoid membrane. The light-harvesting complex (LHC) functions as a light receptor, it captures and delivers excitation energy to photosystems with which it is closely associated. Energy is transferred from the carotenoid and chlorophyll C (or B) to chlorophyll A and the photosynthetic reaction centers where it is used to synthesize ATP and reducing power. In Chattonella marina var. antiqua (Red tide flagellate), this protein is Fucoxanthin-chlorophyll a-c binding protein, chloroplastic.